An 886-amino-acid polypeptide reads, in one-letter code: Protein suppressor of hairy wing (886 aa).

2 disordered regions span residues 24-62 and 167-211; these read SVSP…GIKG and DEVV…KNSG. A compositionally biased stretch (acidic residues) spans 184-201; the sequence is VTEEEEEEEEDDLDEEGD. The segment at 221-243 adopts a C2H2-type 1; atypical zinc-finger fold; it reads HVCGKCYKTFRRLMSLKKHLEFC. A C2H2-type 2 zinc finger spans residues 291–314; that stretch reads INCPDCPKSFKTQTSYERHIFITH. A C2H2-type 3; atypical zinc finger spans residues 320–342; sequence YPCSICNANLRSEALLKLHEEQH. C2H2-type zinc fingers lie at residues 349 to 367, 381 to 403, 414 to 436, 442 to 464, 470 to 492, 498 to 520, 524 to 546, 554 to 578, and 600 to 623; these read YACK…LKRH, MSCK…LKHH, YMCH…IRTH, FDCD…RRYH, YSCT…MKRH, HKCE…SKTH, FACD…VKEH, FSCT…AGDH, and TDCA…RSVH. Positions 571 to 587 are enriched in basic and acidic residues; sequence QHMDAGDHSEKSGEKPQ. Residues 571–594 form a disordered region; it reads QHMDAGDHSEKSGEKPQRAKRSST.

It is found in the nucleus. Functionally, component of the gypsy chromatin insulator complex which is required for the function of the gypsy chromatin insulator and other endogenous chromatin insulators. Chromatin insulators are regulatory elements which establish independent domains of transcriptional activity within eukaryotic genomes. Insulators have two defining properties; they can block the communication between an enhancer and a promoter when placed between them and can also buffer transgenes from position effect variegation (PEV). Insulators are proposed to structure the chromatin fiber into independent domains of differing transcriptional potential by promoting the formation of distinct chromatin loops. This chromatin looping may involve the formation of insulator bodies, where homotypic interactions between individual subunits of the insulator complex could promote the clustering of widely spaced insulators at the nuclear periphery. Within the gypsy insulator complex, this protein binds specifically to a region of the gypsy element located 3' of the 5' long terminal repeat (LTR), and may also mediate interaction with other endogenous insulators at sites distinct from those recognized by Cp190. Cooperates with pita and cliff to recruit Cp190 and regulate insulator function at the front-ultraabdominal (Fub) boundary. The protein is Protein suppressor of hairy wing (su(Hw)) of Drosophila ananassae (Fruit fly).